Here is a 222-residue protein sequence, read N- to C-terminus: Protein GrpE (222 aa).

Disordered stretches follow at residues 1–21 and 200–222; these read MNDGFAMNTHSKDERAPENGQ and KGGPKAETPAATSEQAAQGPEGA.

Belongs to the GrpE family. As to quaternary structure, homodimer.

It is found in the cytoplasm. Functionally, participates actively in the response to hyperosmotic and heat shock by preventing the aggregation of stress-denatured proteins, in association with DnaK and GrpE. It is the nucleotide exchange factor for DnaK and may function as a thermosensor. Unfolded proteins bind initially to DnaJ; upon interaction with the DnaJ-bound protein, DnaK hydrolyzes its bound ATP, resulting in the formation of a stable complex. GrpE releases ADP from DnaK; ATP binding to DnaK triggers the release of the substrate protein, thus completing the reaction cycle. Several rounds of ATP-dependent interactions between DnaJ, DnaK and GrpE are required for fully efficient folding. In Chelativorans sp. (strain BNC1), this protein is Protein GrpE.